A 141-amino-acid chain; its full sequence is 6,7-dimethyl-8-ribityllumazine synthase (141 aa).

Residues F13, 45 to 47, and 69 to 71 each bind 5-amino-6-(D-ribitylamino)uracil; these read SFE and AII. 74-75 is a (2S)-2-hydroxy-3-oxobutyl phosphate binding site; it reads DT. The active-site Proton donor is H77. L102 lines the 5-amino-6-(D-ribitylamino)uracil pocket. R117 is a binding site for (2S)-2-hydroxy-3-oxobutyl phosphate.

The protein belongs to the DMRL synthase family.

The enzyme catalyses (2S)-2-hydroxy-3-oxobutyl phosphate + 5-amino-6-(D-ribitylamino)uracil = 6,7-dimethyl-8-(1-D-ribityl)lumazine + phosphate + 2 H2O + H(+). The protein operates within cofactor biosynthesis; riboflavin biosynthesis; riboflavin from 2-hydroxy-3-oxobutyl phosphate and 5-amino-6-(D-ribitylamino)uracil: step 1/2. Catalyzes the formation of 6,7-dimethyl-8-ribityllumazine by condensation of 5-amino-6-(D-ribitylamino)uracil with 3,4-dihydroxy-2-butanone 4-phosphate. This is the penultimate step in the biosynthesis of riboflavin. This chain is 6,7-dimethyl-8-ribityllumazine synthase, found in Methanopyrus kandleri (strain AV19 / DSM 6324 / JCM 9639 / NBRC 100938).